The chain runs to 1066 residues: Hemoglobin and hemoglobin-haptoglobin-binding protein C (1066 aa).

Residues 1 to 24 form the signal peptide; it reads MTNFKFTLLARSIAFALNASTAYA. Repeat copies occupy residues 26 to 29, 30 to 33, 34 to 37, 38 to 41, 42 to 45, 46 to 49, and 50 to 53. Positions 26 to 53 are 7 X 4 AA tandem repeats of Q-P-T-N; that stretch reads QPTNQPTNQPTNQPTNQPTNQPTNQPTN. Residues 26 to 54 are compositionally biased toward low complexity; the sequence is QPTNQPTNQPTNQPTNQPTNQPTNQPTNQ. The interval 26–57 is disordered; that stretch reads QPTNQPTNQPTNQPTNQPTNQPTNQPTNQDSN. The TonB box motif lies at 63 to 70; that stretch reads EQINVSGS. Positions 66–200 constitute a TBDR plug domain; the sequence is NVSGSTETIN…LGGSVIFETK (135 aa). The TBDR beta-barrel domain maps to 208-1066; the sequence is DKDYYVSYKR…NYRMSVQFEF (859 aa). The TonB C-terminal box motif lies at 1049 to 1066; the sequence is NRLYAPGRNYRMSVQFEF.

This sequence belongs to the TonB-dependent receptor family. Hemoglobin/haptoglobin binding protein subfamily.

Its subcellular location is the cell outer membrane. Functionally, acts as a receptor for hemoglobin or the hemoglobin/haptoglobin complex of the human host and is required for heme uptake. This chain is Hemoglobin and hemoglobin-haptoglobin-binding protein C (hgpC), found in Haemophilus influenzae.